We begin with the raw amino-acid sequence, 146 residues long: Hemoglobin subunit beta (146 aa).

Positions 2 to 146 constitute a Globin domain; the sequence is FLTAEEKSLV…VANALAHKYH (145 aa). Ser44 carries the phosphoserine modification. Lys59 carries the post-translational modification N6-acetyllysine. His63 serves as a coordination point for heme b. Residue Lys82 is modified to N6-acetyllysine. Position 92 (His92) interacts with heme b. At Cys93 the chain carries S-nitrosocysteine. Lys144 carries the N6-acetyllysine modification.

It belongs to the globin family. Heterotetramer of two alpha chains and two beta chains. As to expression, red blood cells.

Its function is as follows. Involved in oxygen transport from the lung to the various peripheral tissues. This is Hemoglobin subunit beta (HBB) from Proteles cristata (Aardwolf).